The primary structure comprises 170 residues: MTGGVMSQKFVVGAGLLVCSVCSLSAMAGSKPVDLILRVLVDAPPPCSIKGSQVEFGNMIADNVDGTNYRQDAKYTLNCTNSLANDLRMQLKGNTSTINGETVLSTNITGLGIRIENSADNSLFAVGENSWTPFNINNQPQLKAVPVKASGAQLAAGEFNASLTMVVDYQ.

The first 28 residues, methionine 1–alanine 28, serve as a signal peptide directing secretion.

The protein belongs to the fimbrial protein family.

Part of the yfcOPQRSUV fimbrial operon. Could contribute to adhesion to various surfaces in specific environmental niches. Increases adhesion to eukaryotic T24 bladder epithelial cells in the absence of fim genes. This is an uncharacterized protein from Escherichia coli (strain K12).